Here is a 288-residue protein sequence, read N- to C-terminus: S-methyl-5'-thioadenosine phosphorylase (288 aa).

Residues Ser-10, 52–53, and 85–86 contribute to the phosphate site; these read RH and TA. Residue Met-188 participates in substrate binding. Phosphate is bound at residue Thr-189. A substrate-binding site is contributed by 212-214; sequence DYD.

Belongs to the PNP/MTAP phosphorylase family. MTAP subfamily. In terms of assembly, homotrimer.

The protein resides in the cytoplasm. Its subcellular location is the nucleus. It catalyses the reaction S-methyl-5'-thioadenosine + phosphate = 5-(methylsulfanyl)-alpha-D-ribose 1-phosphate + adenine. It functions in the pathway amino-acid biosynthesis; L-methionine biosynthesis via salvage pathway; S-methyl-5-thio-alpha-D-ribose 1-phosphate from S-methyl-5'-thioadenosine (phosphorylase route): step 1/1. Its function is as follows. Catalyzes the reversible phosphorylation of S-methyl-5'-thioadenosine (MTA) to adenine and 5-methylthioribose-1-phosphate. Involved in the breakdown of MTA, a major by-product of polyamine biosynthesis. Responsible for the first step in the methionine salvage pathway after MTA has been generated from S-adenosylmethionine. Has broad substrate specificity with 6-aminopurine nucleosides as preferred substrates. The protein is S-methyl-5'-thioadenosine phosphorylase of Caenorhabditis elegans.